A 912-amino-acid chain; its full sequence is Probable dipeptidyl-aminopeptidase B (912 aa).

The segment at 1–74 (MSSALSPEGD…GPFLGPGASL (74 aa)) is disordered. Residues 1 to 85 (MSSALSPEGD…REPMDRGLRR (85 aa)) lie on the Cytoplasmic side of the membrane. Residues 16–27 (DSLSSVSTTSLV) show a composition bias toward low complexity. A compositionally biased stretch (basic and acidic residues) spans 30 to 50 (RIQEKTEMDADNDKEKDPRAL). A compositionally biased stretch (acidic residues) spans 51–63 (DDEDPLRDEDDLE). Residues 86 to 106 (ILIIVAVVFIGGWLAGLGIFI) form a helical; Signal-anchor for type II membrane protein membrane-spanning segment. At 107–912 (ASGSYHHESD…KRHMVPQALV (806 aa)) the chain is on the vacuolar side. An N-linked (GlcNAc...) asparagine glycan is attached at Asn344. The active-site Charge relay system is the Ser749. Residue Asn808 is glycosylated (N-linked (GlcNAc...) asparagine). Catalysis depends on charge relay system residues Asp826 and His859. Positions 892–912 (PQPQKDPVEKEKRHMVPQALV) are disordered.

Belongs to the peptidase S9B family.

It is found in the vacuole membrane. It carries out the reaction Release of an N-terminal dipeptide, Xaa-Yaa-|-Zaa-, from a polypeptide, preferentially when Yaa is Pro, provided Zaa is neither Pro nor hydroxyproline.. In terms of biological role, type IV dipeptidyl-peptidase which removes N-terminal dipeptides sequentially from polypeptides having unsubstituted N-termini provided that the penultimate residue is proline. This is Probable dipeptidyl-aminopeptidase B (DAPB) from Fusarium vanettenii (strain ATCC MYA-4622 / CBS 123669 / FGSC 9596 / NRRL 45880 / 77-13-4) (Fusarium solani subsp. pisi).